A 270-amino-acid chain; its full sequence is Myelin protein zero-like protein 1 (270 aa).

The signal sequence occupies residues Met1–Ile35. Residues Ser36–Arg151 form the Ig-like V-type domain. The Extracellular segment spans residues Ser36–Val162. Asn50 and Asn130 each carry an N-linked (GlcNAc...) asparagine glycan. Cys58 and Cys135 are joined by a disulfide. A helical transmembrane segment spans residues Phe163–Ile183. Over Ser184–Asp270 the chain is Cytoplasmic. The disordered stretch occupies residues Thr201 to Asn257. 4 positions are modified to phosphoserine: Ser204, Ser206, Ser210, and Ser221. An ITIM motif 1 motif is present at residues Val240 to Leu245. Tyr242 is subject to Phosphotyrosine. Ser261 carries the post-translational modification Phosphoserine. An ITIM motif 2 motif is present at residues Val262–Ile267. Tyr264 is modified (phosphotyrosine).

The protein belongs to the myelin P0 protein family. As to quaternary structure, interacts with phosphorylated PTPN11/SHP-2. Phosphorylated on tyrosine residues upon stimulation with pervanadate and concanavalin-A (ConA). Phosphorylation at Tyr-242 and Tyr-264 is required for interaction with PTPN11/SHP-2. Dephosphorylated by PTPN11/SHP-2 (in vitro). Post-translationally, N-glycosylated.

It localises to the membrane. In terms of biological role, cell surface receptor, which is involved in signal transduction processes. Recruits PTPN11/SHP-2 to the cell membrane and is a putative substrate of PTPN11/SHP-2. Is a major receptor for concanavalin-A (ConA) and is involved in cellular signaling induced by ConA, which probably includes Src family tyrosine-protein kinases. May be involved in regulation of integrin-mediated cell motility. This is Myelin protein zero-like protein 1 (Mpzl1) from Rattus norvegicus (Rat).